The following is a 633-amino-acid chain: tRNA uridine 5-carboxymethylaminomethyl modification enzyme MnmG (633 aa).

FAD-binding positions include 15–20 (GAGHAG), Ile127, and Ser182. 276–290 (GPRYCPSIEDKIVRF) is a binding site for NAD(+). Position 373 (Gln373) interacts with FAD.

This sequence belongs to the MnmG family. As to quaternary structure, homodimer. Heterotetramer of two MnmE and two MnmG subunits. FAD is required as a cofactor.

It is found in the cytoplasm. In terms of biological role, NAD-binding protein involved in the addition of a carboxymethylaminomethyl (cmnm) group at the wobble position (U34) of certain tRNAs, forming tRNA-cmnm(5)s(2)U34. This chain is tRNA uridine 5-carboxymethylaminomethyl modification enzyme MnmG, found in Streptococcus agalactiae serotype III (strain NEM316).